A 2171-amino-acid polypeptide reads, in one-letter code: Voltage-dependent L-type calcium channel subunit alpha-1C (2171 aa).

Residues 1–154 lie on the Cytoplasmic side of the membrane; the sequence is MLRALVQPAT…RACISIVEWK (154 aa). Positions 77-98 are calmodulin-binding; it reads GAALSWQAAIDAARQAKLMGSA. A disordered region spans residues 103–128; sequence ISTVSSTQRKRQQYGKPKKQGSTTAT. Basic residues predominate over residues 110-121; that stretch reads QRKRQQYGKPKK. One copy of the I repeat lies at 141-438; it reads NPIRRACISI…LVLGVLSGEF (298 aa). Residues 155-173 traverse the membrane as a helical segment; sequence PFEIIILLTIFANCVALAI. Over 174–188 the chain is Extracellular; that stretch reads YIPFPEDDSNATNSN. N-linked (GlcNAc...) asparagine glycosylation occurs at N183. The chain crosses the membrane as a helical span at residues 189-209; sequence LERVEYLFLIIFTVEAFLKVI. Residues 210 to 218 are Cytoplasmic-facing; that stretch reads AYGLLFHPN. A helical transmembrane segment spans residues 219-239; that stretch reads AYLRNGWNLLDFIIVVVGLFS. Residues 240-262 lie on the Extracellular side of the membrane; that stretch reads AILEQATKADGANALGGKGAGFD. Residues 263–281 form a helical membrane-spanning segment; the sequence is VKALRAFRVLRPLRLVSGV. The Cytoplasmic segment spans residues 282 to 298; the sequence is PSLQVVLNSIIKAMVPL. The helical transmembrane segment at 299–320 threads the bilayer; the sequence is LHIALLVLFVIIIYAIIGLELF. The Extracellular segment spans residues 321–380; it reads MGKMHKTCYNQEGVADVPAEDDPSPCALETGHGRQCQNGTVCKPGWDGPKHGITNFDNFA. Cystine bridges form between C328–C356 and C346–C362. N358 carries an N-linked (GlcNAc...) asparagine glycan. The pore-forming intramembrane region spans 381-402; that stretch reads FAMLTVFQCITMEGWTDVLYWM. Positions 391–394 match the Selectivity filter of repeat I motif; that stretch reads TMEG. E393 contacts Ca(2+). Residues 403–410 are Extracellular-facing; the sequence is QDAMGYEL. Residues 411–431 form a helical membrane-spanning segment; it reads PWVYFVSLVIFGSFFVLNLVL. The Cytoplasmic segment spans residues 432-554; the sequence is GVLSGEFSKE…RKCRAAVKSN (123 aa). Residues 458-475 form an AID/alpha-interaction domain; mediates interaction with the beta subunit region; sequence QQLEEDLKGYLDWITQAE. The disordered stretch occupies residues 479-511; that stretch reads PENEDEGMDEEKPRNMSMPTSETESVNTENVAG. Residues 495–508 show a composition bias toward polar residues; the sequence is SMPTSETESVNTEN. Phosphoserine is present on S499. T506 is subject to Phosphothreonine. The II repeat unit spans residues 540–786; the sequence is NRFCRRKCRA…VFLAIAVDNL (247 aa). Residues 555-573 form a helical membrane-spanning segment; sequence VFYWLVIFLVFLNTLTIAS. The Extracellular segment spans residues 574–584; it reads EHYNQPHWLTE. Residues 585–605 traverse the membrane as a helical segment; it reads VQDTANKALLALFTAEMLLKM. Topologically, residues 606–616 are cytoplasmic; sequence YSLGLQAYFVS. A helical membrane pass occupies residues 617–636; sequence LFNRFDCFIVCGGILETILV. At 637–645 the chain is on the extracellular side; sequence ETKVMSPLG. Residues 646 to 664 form a helical membrane-spanning segment; sequence ISVLRCVRLLRIFKITRYW. Over 665–683 the chain is Cytoplasmic; it reads NSLSNLVASLLNSVRSIAS. A helical membrane pass occupies residues 684–703; it reads LLLLLFLFIIIFSLLGMQLF. Residues 704–723 lie on the Extracellular side of the membrane; that stretch reads GGKFNFDEMQTRRSTFDNFP. Residues 724–745 constitute an intramembrane region (pore-forming); that stretch reads QSLLTVFQILTGEDWNSVMYDG. A Selectivity filter of repeat II motif is present at residues 734–737; sequence TGED. A Ca(2+)-binding site is contributed by E736. Residues 746–755 lie on the Extracellular side of the membrane; it reads IMAYGGPSFP. Residues 756-775 form a helical membrane-spanning segment; sequence GMLVCIYFIILFICGNYILL. Topologically, residues 776-930 are cytoplasmic; that stretch reads NVFLAIAVDN…LQCHRIVNDT (155 aa). Residues 794 to 891 form a disordered region; that stretch reads SAQKEEEEEK…EMPVGPRPRP (98 aa). Basic and acidic residues predominate over residues 813–836; it reads SPEKKQEVVGKPALEEAKEEKIEL. 2 positions are modified to phosphoserine: S838 and S845. Residues 859 to 906 are interaction with STAC2; it reads NESEDKSPYPNPETTGEEDEEEPEMPVGPRPRPLSELHLKEKAVPMPE. A compositionally biased stretch (acidic residues) spans 873–882; it reads TGEEDEEEPE. The stretch at 917 to 1199 is one III repeat; it reads NRFRLQCHRI…IFVGFVIVTF (283 aa). Residues 931–949 form a helical membrane-spanning segment; sequence IFTNLILFFILLSSISLAA. Residues 950-961 are Extracellular-facing; the sequence is EDPVQHTSFRNH. A helical transmembrane segment spans residues 962–981; that stretch reads ILFYFDIVFTTIFTIEIALK. The Cytoplasmic segment spans residues 982–997; it reads MTAYGAFLHKGSFCRN. Residues 998–1016 form a helical membrane-spanning segment; that stretch reads YFNILDLLVVSVSLISFGI. Residues 1017–1023 lie on the Extracellular side of the membrane; it reads QSSAINV. The helical transmembrane segment at 1024 to 1042 threads the bilayer; the sequence is VKILRVLRVLRPLRAINRA. Over 1043–1061 the chain is Cytoplasmic; that stretch reads KGLKHVVQCVFVAIRTIGN. The helical transmembrane segment at 1062–1081 threads the bilayer; it reads IVIVTTLLQFMFACIGVQLF. At 1082–1131 the chain is on the extracellular side; sequence KGKLYTCSDSSKQTEAECKGNYITYKDGEVDHPIIQPRSWENSKFDFDNV. Cysteines 1088 and 1099 form a disulfide. The tract at residues 1119 to 1208 is dihydropyridine binding; the sequence is RSWENSKFDF…FQEQGEQEYK (90 aa). Positions 1132–1152 form an intramembrane region, pore-forming; sequence LAAMMALFTVSTFEGWPELLY. The short motif at 1143-1146 is the Selectivity filter of repeat III element; that stretch reads TFEG. Position 1145 (E1145) interacts with Ca(2+). Residues 1153-1169 are Extracellular-facing; the sequence is RSIDSHTEDKGPIYNYR. A helical membrane pass occupies residues 1170 to 1191; sequence VEISIFFIIYIIIIAFFMMNIF. Residues 1192–1249 are Cytoplasmic-facing; that stretch reads VGFVIVTFQEQGEQEYKNCELDKNQRQCVEYALKARPLRRYIPKNQHQYKVWYVVNST. An IV repeat occupies 1236-1509; it reads NQHQYKVWYV…LFVAVIMDNF (274 aa). A helical membrane pass occupies residues 1250-1271; that stretch reads YFEYLMFVLILLNTICLAMQHY. The Extracellular segment spans residues 1272-1279; the sequence is GQSCLFKI. Residues 1280–1301 traverse the membrane as a helical segment; that stretch reads AMNILNMLFTGLFTVEMILKLI. Over 1302–1311 the chain is Cytoplasmic; sequence AFKPKGYFSD. Residues 1312-1331 form a helical membrane-spanning segment; that stretch reads PWNVFDFLIVIGSIIDVILS. Over 1332-1354 the chain is Extracellular; the sequence is ETNPAEHTQCSPSMNAEENSRIS. The chain crosses the membrane as a helical span at residues 1355-1373; that stretch reads ITFFRLFRVMRLVKLLSRG. Over 1374–1391 the chain is Cytoplasmic; that stretch reads EGIRTLLWTFIKSFQALP. The chain crosses the membrane as a helical span at residues 1392–1412; the sequence is YVALLIVMLFFIYAVIGMQVF. Residues 1413–1434 lie on the Extracellular side of the membrane; it reads GKIALNDTTEINRNNNFQTFPQ. N1418 carries N-linked (GlcNAc...) asparagine glycosylation. Residues 1435–1453 constitute an intramembrane region (pore-forming); sequence AVLLLFRCATGEAWQDIML. Positions 1444 to 1447 match the Selectivity filter of repeat IV motif; it reads TGEA. At 1454-1481 the chain is on the extracellular side; the sequence is ACMPGKKCAPESEPHNSTEGETPCGSSF. A dihydropyridine binding region spans residues 1460–1528; sequence KCAPESEPHN…LGPHHLDEFK (69 aa). C1461 and C1477 are disulfide-bonded. The N-linked (GlcNAc...) asparagine glycan is linked to N1469. The segment at 1474–1516 is phenylalkylamine binding; the sequence is ETPCGSSFAVFYFISFYMLCAFLIINLFVAVIMDNFDYLTRDW. Residues 1482 to 1506 traverse the membrane as a helical segment; the sequence is AVFYFISFYMLCAFLIINLFVAVIM. Topologically, residues 1507 to 2171 are cytoplasmic; that stretch reads DNFDYLTRDW…ADRRAGVSSL (665 aa). Residues 1641–1668 form an important for interaction with STAC1, STAC2 and STAC3 region; that stretch reads DEVTVGKFYATFLIQEYFRKFKKRKEQG. Residues 1647–1667 are calmodulin-binding IQ region; that stretch reads KFYATFLIQEYFRKFKKRKEQ. Residues 1681–1700 are important for localization in at the junctional membrane; it reads LQAGLRTLHDIGPEIRRAIS. S1700 and S1721 each carry phosphoserine. A disordered region spans residues 1760-1797; the sequence is ISKAGNNQGDTESPSHEKLVDSTFTPSSYSSTGSNANI. Positions 1781-1793 are enriched in polar residues; that stretch reads STFTPSSYSSTGS. S1928 is subject to Phosphoserine; by PKA. Disordered stretches follow at residues 1971–2014, 2026–2060, and 2114–2155; these read RSHS…EKLN, SGEN…GRQF, and SGGA…PGCG. Residues 2130 to 2140 show a composition bias toward basic and acidic residues; it reads NRRDPGRDRAG.

Belongs to the calcium channel alpha-1 subunit (TC 1.A.1.11) family. CACNA1C subfamily. Component of a calcium channel complex consisting of a pore-forming alpha subunit (CACNA1C) and ancillary beta, gamma and delta subunits. The channel complex contains alpha, beta, gamma and delta subunits in a 1:1:1:1 ratio, i.e. it contains only one of each type of subunit. CACNA1C channel activity is modulated by ancillary subunits, such as CACNB1, CACNB2, CACNB3, CACNA2D1 and CACNA2D4. Interacts with CACNB1. Interacts with CACNB2. Identified in a complex with CACNA2D4 and CACNB3. Interacts with CACNB3. Interacts with CACNA2D1. Interacts with the gamma subunits CACNG4, CACNG6, CACNG7 and CACNG8. Interacts with CACNA2D4. Interacts with CALM1. Interacts (via the N-terminus and the C-terminal C and IQ motifs) with CABP1; this inhibits Ca(2+)-dependent channel inactivation. The binding via the C motif is calcium independent whereas the binding via IQ requires the presence of calcium and is mutually exclusive with calmodulin binding. The binding to the cytoplasmic N-terminal domain is calcium independent but is essential for the channel modulation. Interacts (via C-terminal CDB motif) with CABP5; in a calcium-dependent manner. Interacts with CIB1; the interaction increases upon cardiomyocytes hypertrophy. Interacts with STAC1, STAC2 and STAC3; this inhibits channel inactivation, probably by hindering CALM1 binding. Post-translationally, phosphorylation by PKA at Ser-1928 activates the channel. Elevated levels of blood glucose lead to increased phosphorylation by PKA. As to expression, expression in cardiac muscle. In lung, expressed in airway and vascular smooth muscle cells.

It is found in the cell membrane. It localises to the sarcolemma. Its subcellular location is the perikaryon. The protein localises to the postsynaptic density membrane. The protein resides in the cell projection. It is found in the dendrite. It localises to the T-tubule. It catalyses the reaction Ca(2+)(in) = Ca(2+)(out). Its activity is regulated as follows. Inhibited by dihydropyridines (DHP), such as isradipine. Inhibited by nifedipine. Channel activity is regulated by Ca(2+) and calmodulin. Binding of STAC1, STAC2 or STAC3 to a region that overlaps with the calmodulin binding site inhibits channel inactivation by Ca(2+) and calmodulin. Binding of calmodulin or CABP1 at the same regulatory sites results in opposite effects on the channel function. Shear stress and pressure increases calcium channel activity. Pore-forming, alpha-1C subunit of the voltage-gated calcium channel that gives rise to L-type calcium currents. Mediates influx of calcium ions into the cytoplasm, and thereby triggers calcium release from the sarcoplasm. Plays an important role in excitation-contraction coupling in the heart. Required for normal heart development and normal regulation of heart rhythm. Required for normal contraction of smooth muscle cells in blood vessels and in the intestine. Essential for normal blood pressure regulation via its role in the contraction of arterial smooth muscle cells. Long-lasting (L-type) calcium channels belong to the 'high-voltage activated' (HVA) group. The sequence is that of Voltage-dependent L-type calcium channel subunit alpha-1C (CACNA1C) from Oryctolagus cuniculus (Rabbit).